Reading from the N-terminus, the 573-residue chain is MATPSSVASSSSRDQVQRIHRVTRENRHLWYQLTVLQQPERARACGSGMKANSDRRPVDPPPVVELRIIEGPSVEEGKDITFDYNANFFLYASLEQARTIAHGRVQNGATNNPPILTGVPASGMAYLDRPTEAGYFIFPDLSVRHEGYFRLSFSLYETTKEPKDFDLEPADSDLPPGVDWRMEIKTQPFNVFSAKKFPGLMESTSLSKTVADQGCRVRIRRDVRMRKRDGKGSGFDRRGEEEYSRRRTVTPAPAEDPNLRARSVSNASEHRGPYMPQEPPRRPSAAESYHAPPPLPPPPPSSYDAPPPAARPGHLGFGGDHNMPPQYGAPAARPYGHPQSAPIPPATPTGPYPTSSAAPSPYAKQDHHHQQQYSYNSRPPAPSASPAPPMKHAMYDNRPSEPYVPHSSPSVYASTERRPSYANYSAPAPYSTPASQPTYSTPASQPTYSTPASQPTYSAPPPAPYSAPAPPPPRPSMSQSSLAPLKIASLVSPLPPIEAQTEPLPPPPMLSTGGKRKHDHVFSQNHKPLYNGQRQLDAHYGHGYRGLTPEPDQGLYSRADGQIGVVTFNQYQV.

In terms of domain architecture, Velvet spans 26–220 (NRHLWYQLTV…ADQGCRVRIR (195 aa)). Residues 40-45 (ERARAC) carry the Nuclear localization signal motif. Positions 222–520 (DVRMRKRDGK…STGGKRKHDH (299 aa)) are disordered. Basic and acidic residues predominate over residues 230-245 (GKGSGFDRRGEEEYSR). 2 stretches are compositionally biased toward pro residues: residues 291–310 (APPPLPPPPPSSYDAPPPAA) and 341–351 (APIPPATPTGP). The span at 352-363 (YPTSSAAPSPYA) shows a compositional bias: low complexity. Over residues 379–389 (PPAPSASPAPP) the composition is skewed to pro residues. Positions 432–448 (TPASQPTYSTPASQPTY) are enriched in polar residues. A compositionally biased stretch (pro residues) spans 458–475 (SAPPPAPYSAPAPPPPRP). The interval 476–504 (SMSQSSLAPLKIASLVSPLPPIEAQTEPL) is PEST.

It belongs to the velvet family. VeA subfamily. Component of the heterotrimeric velvet complex composed of LAE1, VEL1 and VEL2; VEL1 acting as a bridging protein between LAE1 and VEL2. Interacts with LAE1.

The protein resides in the nucleus. It localises to the cytoplasm. Component of the velvet transcription factor complex that controls sexual/asexual developmental ratio in response to light, promoting sexual development in the darkness while stimulating asexual sporulation under illumination. The velvet complex hat acts as a global regulator for secondary metabolite gene expression. Regulates expression of the carbohydrate-active enzyme gene clusters. In Hypocrea jecorina (strain QM6a) (Trichoderma reesei), this protein is Developmental and secondary metabolism regulator VEL1.